The sequence spans 488 residues: Ribulose bisphosphate carboxylase large chain (488 aa).

2 residues coordinate substrate: N128 and T178. K180 acts as the Proton acceptor in catalysis. A substrate-binding site is contributed by K182. 3 residues coordinate Mg(2+): K206, D208, and E209. An N6-carboxylysine modification is found at K206. The active-site Proton acceptor is H298. Substrate-binding residues include R299, H331, and S383.

This sequence belongs to the RuBisCO large chain family. Type I subfamily. In terms of assembly, heterohexadecamer of 8 large chains and 8 small chains. It depends on Mg(2+) as a cofactor.

The catalysed reaction is 2 (2R)-3-phosphoglycerate + 2 H(+) = D-ribulose 1,5-bisphosphate + CO2 + H2O. The enzyme catalyses D-ribulose 1,5-bisphosphate + O2 = 2-phosphoglycolate + (2R)-3-phosphoglycerate + 2 H(+). RuBisCO catalyzes two reactions: the carboxylation of D-ribulose 1,5-bisphosphate, the primary event in carbon dioxide fixation, as well as the oxidative fragmentation of the pentose substrate. Both reactions occur simultaneously and in competition at the same active site. The chain is Ribulose bisphosphate carboxylase large chain from Xanthobacter flavus.